Reading from the N-terminus, the 514-residue chain is Na(+)/H(+) antiporter NhaB (514 aa).

A run of 12 helical transmembrane segments spans residues 23–43 (LALL…PFIA), 63–83 (PLLP…TSAA), 97–117 (LLLM…LFIF), 120–140 (LLLS…AAAF), 144–164 (FLDA…FYGI), 202–222 (LMMH…VGEP), 238–258 (FFLR…LTCM), 303–323 (AVIG…VGLI), 357–377 (LTVF…APII), 391–411 (LFYL…VGTI), 447–467 (ATPN…APLI), and 475–495 (VWMA…CVEF).

The protein belongs to the NhaB Na(+)/H(+) (TC 2.A.34) antiporter family.

It is found in the cell inner membrane. It catalyses the reaction 2 Na(+)(in) + 3 H(+)(out) = 2 Na(+)(out) + 3 H(+)(in). Its function is as follows. Na(+)/H(+) antiporter that extrudes sodium in exchange for external protons. This chain is Na(+)/H(+) antiporter NhaB, found in Salmonella gallinarum (strain 287/91 / NCTC 13346).